The chain runs to 88 residues: Small ribosomal subunit protein uS17 (88 aa).

The protein belongs to the universal ribosomal protein uS17 family. As to quaternary structure, part of the 30S ribosomal subunit.

Its function is as follows. One of the primary rRNA binding proteins, it binds specifically to the 5'-end of 16S ribosomal RNA. This Pseudomonas aeruginosa (strain LESB58) protein is Small ribosomal subunit protein uS17.